The following is a 497-amino-acid chain: UPF0371 protein DIP2346 (497 aa).

This sequence belongs to the UPF0371 family.

The chain is UPF0371 protein DIP2346 from Corynebacterium diphtheriae (strain ATCC 700971 / NCTC 13129 / Biotype gravis).